We begin with the raw amino-acid sequence, 520 residues long: Cytochrome b5 reductase 4 (520 aa).

N-acetylmethionine is present on M1. The interval 1–27 is disordered; it reads MLNVPSQAFPAPGSQQRVASQGRSKVP. Over residues 13-23 the composition is skewed to polar residues; it reads GSQQRVASQGR. A Cytochrome b5 heme-binding domain is found at 54-130; the sequence is LIEVTEEELK…LKECLVGRMA (77 aa). Heme is bound by residues H89 and H112. Residues 164–255 enclose the CS domain; it reads PSSPSYDWFQ…KETVSWKCLG (92 aa). The FAD-binding FR-type domain occupies 272–384; that stretch reads LYYRQCQLIS…SGPEGNFKVS (113 aa). FAD is bound by residues 364–379 and 391–423; these read DRLQIGDFVSVSGPEG and DLFLLAAGTGFTPMVTVLNHALTHMSSLRKVKL.

This sequence belongs to the flavoprotein pyridine nucleotide cytochrome reductase family. The cofactor is FAD. As to expression, isoform 2 is expressed in testis, brain, skeletal muscle and in the male germline.

It is found in the endoplasmic reticulum. It carries out the reaction 2 Fe(III)-[cytochrome b5] + NADH = 2 Fe(II)-[cytochrome b5] + NAD(+) + H(+). NADH-cytochrome b5 reductase involved in endoplasmic reticulum stress response pathway. Plays a critical role in protecting pancreatic beta-cells against oxidant stress, possibly by protecting the cell from excess buildup of reactive oxygen species (ROS). This is Cytochrome b5 reductase 4 (Cyb5r4) from Rattus norvegicus (Rat).